Reading from the N-terminus, the 387-residue chain is Probable WRKY transcription factor 36 (387 aa).

The segment at residues 197–264 (CEDPSINDGC…YEGNHDHPLP (68 aa)) is a DNA-binding region (WRKY). A disordered region spans residues 322 to 366 (RPNYPNQLPDDYPLSSSSFSLNFSSPDPPPPSSHDHTLNFSGLRT). Positions 329–346 (LPDDYPLSSSSFSLNFSS) are enriched in low complexity.

Its subcellular location is the nucleus. In terms of biological role, transcription factor. Interacts specifically with the W box (5'-(T)TGAC[CT]-3'), a frequently occurring elicitor-responsive cis-acting element. This chain is Probable WRKY transcription factor 36 (WRKY36), found in Arabidopsis thaliana (Mouse-ear cress).